The chain runs to 317 residues: Melanocyte-stimulating hormone receptor (317 aa).

Over 1-37 (MPMQEPQRRLLDPFNSTRTGTPHLKLSANQTGPWCLH) the chain is Extracellular. Residues N15 and N29 are each glycosylated (N-linked (GlcNAc...) asparagine). The helical transmembrane segment at 38–63 (VSIPDGLFLSLGLVSLVENVLVVISI) threads the bilayer. The Cytoplasmic segment spans residues 64–72 (AKNRNLHSP). A helical membrane pass occupies residues 73-93 (MYYFICCLALSDLLVSVSIVL). Residues 94–118 (ETTLILVLEAGALATRVTVVQQLDN) are Extracellular-facing. The helical transmembrane segment at 119 to 140 (VIDVLICGSMVSSLCFLGAIAV) threads the bilayer. The Cytoplasmic segment spans residues 141 to 163 (DRYISIFYALRYHSIVTLPRARW). The helical transmembrane segment at 164–183 (AIVAIWVASISSSTLFVAYY) threads the bilayer. Topologically, residues 184 to 191 (NHTAVLLC) are extracellular. Residues 192 to 211 (LVTFFLATLALMAVLYVHML) traverse the membrane as a helical segment. Over 212–240 (ARAHQHAQAIAQLHKRQHLVHQGFRLKGA) the chain is Cytoplasmic. The chain crosses the membrane as a helical span at residues 241 to 266 (ATLTILLGIFFLCWGPFFLYLTLIVL). Residues 267 to 279 (CPKHPTCSCFFKN) lie on the Extracellular side of the membrane. Residues 280-300 (LNLFLALIIFNSIVDPLIYAF) form a helical membrane-spanning segment. The Cytoplasmic portion of the chain corresponds to 301–317 (RSQELRMTLKEVLLCSW). A lipid anchor (S-palmitoyl cysteine) is attached at C315.

This sequence belongs to the G-protein coupled receptor 1 family. As to quaternary structure, interacts with MGRN1, but does not undergo MGRN1-mediated ubiquitination; this interaction competes with GNAS-binding and thus inhibits agonist-induced cAMP production. Interacts with OPN3; the interaction results in a decrease in MC1R-mediated cAMP signaling and ultimately a decrease in melanin production in melanocytes.

It is found in the cell membrane. Its function is as follows. Receptor for MSH (alpha, beta and gamma) and ACTH. The activity of this receptor is mediated by G proteins which activate adenylate cyclase. Mediates melanogenesis, the production of eumelanin (black/brown) and phaeomelanin (red/yellow), via regulation of cAMP signaling in melanocytes. The sequence is that of Melanocyte-stimulating hormone receptor (MC1R) from Chaetodipus baileyi (Bailey's pocket mouse).